The chain runs to 272 residues: Shikimate dehydrogenase (NADP(+)) (272 aa).

Residues 19-21 and threonine 66 contribute to the shikimate site; that span reads SLS. Lysine 70 acts as the Proton acceptor in catalysis. An NADP(+)-binding site is contributed by glutamate 82. Residues asparagine 91 and aspartate 106 each contribute to the shikimate site. Residues 129–133, 151–156, and isoleucine 214 contribute to the NADP(+) site; these read GAGGA and NRTPEK. Tyrosine 216 contacts shikimate. NADP(+) is bound at residue glycine 237.

Belongs to the shikimate dehydrogenase family. In terms of assembly, homodimer.

The catalysed reaction is shikimate + NADP(+) = 3-dehydroshikimate + NADPH + H(+). It participates in metabolic intermediate biosynthesis; chorismate biosynthesis; chorismate from D-erythrose 4-phosphate and phosphoenolpyruvate: step 4/7. Involved in the biosynthesis of the chorismate, which leads to the biosynthesis of aromatic amino acids. Catalyzes the reversible NADPH linked reduction of 3-dehydroshikimate (DHSA) to yield shikimate (SA). This chain is Shikimate dehydrogenase (NADP(+)), found in Thermococcus kodakarensis (strain ATCC BAA-918 / JCM 12380 / KOD1) (Pyrococcus kodakaraensis (strain KOD1)).